We begin with the raw amino-acid sequence, 518 residues long: Delta(14)-sterol reductase erg24B (518 aa).

A glycan (N-linked (GlcNAc...) asparagine) is linked at Asn-36. 6 helical membrane passes run 110–130, 150–170, 182–202, 294–314, 321–341, and 355–375; these read VTMW…FLPG, AFLS…LYGT, YVQV…FVYL, IVLT…MEPA, VIMD…VPFL, and ELGL…YVIF. NADP(+) is bound by residues Lys-382, Arg-386, Leu-409, Trp-414, and 421-422; that span reads NY. The chain crosses the membrane as a helical span at residues 464–484; the sequence is SRGWGMIFTYFYMIYFGVLLL. Residues Asp-490, 494-498, and Tyr-505 contribute to the NADP(+) site; that span reads CKRKY.

The protein belongs to the ERG4/ERG24 family.

The protein localises to the endoplasmic reticulum membrane. The protein operates within steroid metabolism; ergosterol biosynthesis. Delta(14)-sterol reductase; part of the third module of ergosterol biosynthesis pathway that includes the late steps of the pathway. Catalyzes the reduction of the C14=C15 double bond within 4,4,24-trimethyl ergosta-8,14,24(28)-trienolto produce 4,4-dimethylfecosterol. The third module or late pathway involves the ergosterol synthesis itself through consecutive reactions that mainly occur in the endoplasmic reticulum (ER) membrane. Firstly, the squalene synthase erg9 catalyzes the condensation of 2 farnesyl pyrophosphate moieties to form squalene, which is the precursor of all steroids. Squalene synthase is crucial for balancing the incorporation of farnesyl diphosphate (FPP) into sterol and nonsterol isoprene synthesis. Secondly, squalene is converted into lanosterol by the consecutive action of the squalene epoxidase erg1 and the lanosterol synthase erg7. Then, the delta(24)-sterol C-methyltransferase erg6 methylates lanosterol at C-24 to produce eburicol. Eburicol is the substrate of the sterol 14-alpha demethylase encoded by cyp51A and cyp51B, to yield 4,4,24-trimethyl ergosta-8,14,24(28)-trienol. The C-14 reductase erg24 then reduces the C14=C15 double bond which leads to 4,4-dimethylfecosterol. A sequence of further demethylations at C-4, involving the C-4 demethylation complex containing the C-4 methylsterol oxidases erg25A or erg25B, the sterol-4-alpha-carboxylate 3-dehydrogenase erg26 and the 3-keto-steroid reductase erg27, leads to the production of fecosterol via 4-methylfecosterol. The C-8 sterol isomerase erg2 then catalyzes the reaction which results in unsaturation at C-7 in the B ring of sterols and thus converts fecosterol to episterol. The sterol-C5-desaturase erg3B then catalyzes the introduction of a C-5 double bond in the B ring to produce 5-dehydroepisterol. The 2 other sterol-C5-desaturases, erg3A and erg3C, seem to be less important in ergosterol biosynthesis. The C-22 sterol desaturase erg5 further converts 5-dehydroepisterol into ergosta-5,7,22,24(28)-tetraen-3beta-ol by forming the C-22(23) double bond in the sterol side chain. Finally, ergosta-5,7,22,24(28)-tetraen-3beta-ol is substrate of the C-24(28) sterol reductases erg4A and erg4B to produce ergosterol. Possible alternative sterol biosynthetic pathways might exist from fecosterol to ergosterol, depending on the activities of the erg3 isoforms. The polypeptide is Delta(14)-sterol reductase erg24B (Aspergillus fumigatus (strain ATCC MYA-4609 / CBS 101355 / FGSC A1100 / Af293) (Neosartorya fumigata)).